Reading from the N-terminus, the 281-residue chain is Undecaprenyl-diphosphatase (281 aa).

A run of 6 helical transmembrane segments spans residues 90-110 (WLVT…QDSI), 113-133 (VLRG…VLGA), 147-167 (LSWK…IPGV), 191-211 (SFLL…YDEL), 217-237 (IAWV…YAVI), and 257-277 (IAAA…AFQG).

The protein belongs to the UppP family.

It localises to the cell membrane. It catalyses the reaction di-trans,octa-cis-undecaprenyl diphosphate + H2O = di-trans,octa-cis-undecaprenyl phosphate + phosphate + H(+). In terms of biological role, catalyzes the dephosphorylation of undecaprenyl diphosphate (UPP). Confers resistance to bacitracin. In Kineococcus radiotolerans (strain ATCC BAA-149 / DSM 14245 / SRS30216), this protein is Undecaprenyl-diphosphatase.